The following is a 108-amino-acid chain: VQ motif-containing protein 10 (108 aa).

A VQ motif is present at residues phenylalanine 29 to glycine 38. A disordered region spans residues isoleucine 65–threonine 85. Positions histidine 73–methionine 82 are enriched in gly residues.

As to quaternary structure, interacts with WRKY25, WRKY26 and WRKY33.

The protein resides in the nucleus. Its function is as follows. May modulate WRKY transcription factor activities. The chain is VQ motif-containing protein 10 from Arabidopsis thaliana (Mouse-ear cress).